Reading from the N-terminus, the 113-residue chain is MTDTHSIAQPFEAEVSPANNRHVTVGYASRYPDYSRIPAITLKGQWLEAAGFATGTAVDVKVMEGCIVLTAQPPAAEESELMQSLRQVCKLSARKQKQVQAFIGVIAGKQKVA.

Positions 29 to 74 (SRYPDYSRIPAITLKGQWLEAAGFATGTAVDVKVMEGCIVLTAQPP) constitute a SpoVT-AbrB domain.

This sequence belongs to the SymE family.

It is found in the cytoplasm. Its function is as follows. Involved in the degradation and recycling of damaged RNA. It is itself a target for degradation by the ATP-dependent protease Lon. In Escherichia coli (strain K12 / MC4100 / BW2952), this protein is Endoribonuclease SymE.